Here is a 103-residue protein sequence, read N- to C-terminus: MQKIRKGDKVVVLTGKDKGRTGEVIQVMPKEDRALVRGVNVVKRHQRQTQNQEAGIITKEASIHLSNIAIADPKDGKPTRVGFKIDGDKKVRVAKRSGDVIDG.

This sequence belongs to the universal ribosomal protein uL24 family. In terms of assembly, part of the 50S ribosomal subunit.

In terms of biological role, one of two assembly initiator proteins, it binds directly to the 5'-end of the 23S rRNA, where it nucleates assembly of the 50S subunit. Its function is as follows. One of the proteins that surrounds the polypeptide exit tunnel on the outside of the subunit. In Rhizobium meliloti (strain 1021) (Ensifer meliloti), this protein is Large ribosomal subunit protein uL24.